Reading from the N-terminus, the 52-residue chain is Light-harvesting protein B800/830/1020 alpha-1 chain (52 aa).

Topologically, residues 1–12 are cytoplasmic; sequence MWRIWKVFDPRR. A helical membrane pass occupies residues 13-33; it reads ILIATAIWLIIIALTIHVILM. Histidine 29 is a binding site for a bacteriochlorophyll. Residues 34 to 52 lie on the Periplasmic side of the membrane; the sequence is TTERFNWLEGAPAAEYYSS.

The protein belongs to the antenna complex alpha subunit family. In terms of assembly, the core complex is formed by different alpha and beta chains, binding bacteriochlorophyll molecules, and arranged most probably in tetrameric structures disposed around the reaction center. The non-pigmented gamma chains may constitute additional components.

The protein localises to the cell inner membrane. Functionally, antenna complexes are light-harvesting systems, which transfer the excitation energy to the reaction centers. In Halorhodospira halochloris (Ectothiorhodospira halochloris), this protein is Light-harvesting protein B800/830/1020 alpha-1 chain.